The following is a 484-amino-acid chain: tRNA sulfurtransferase (484 aa).

Residues 63–167 (QGIRDRLSCM…DQRLFVVHDQ (105 aa)) form the THUMP domain. ATP-binding positions include 185–186 (LM), Lys-267, Gly-289, and Gln-298. A disulfide bridge links Cys-346 with Cys-457. In terms of domain architecture, Rhodanese spans 405 to 483 (ALAGQVIIDI…GHANVRVYRP (79 aa)). The Cysteine persulfide intermediate role is filled by Cys-457.

It belongs to the ThiI family.

It localises to the cytoplasm. The catalysed reaction is [ThiI sulfur-carrier protein]-S-sulfanyl-L-cysteine + a uridine in tRNA + 2 reduced [2Fe-2S]-[ferredoxin] + ATP + H(+) = [ThiI sulfur-carrier protein]-L-cysteine + a 4-thiouridine in tRNA + 2 oxidized [2Fe-2S]-[ferredoxin] + AMP + diphosphate. It catalyses the reaction [ThiS sulfur-carrier protein]-C-terminal Gly-Gly-AMP + S-sulfanyl-L-cysteinyl-[cysteine desulfurase] + AH2 = [ThiS sulfur-carrier protein]-C-terminal-Gly-aminoethanethioate + L-cysteinyl-[cysteine desulfurase] + A + AMP + 2 H(+). It functions in the pathway cofactor biosynthesis; thiamine diphosphate biosynthesis. In terms of biological role, catalyzes the ATP-dependent transfer of a sulfur to tRNA to produce 4-thiouridine in position 8 of tRNAs, which functions as a near-UV photosensor. Also catalyzes the transfer of sulfur to the sulfur carrier protein ThiS, forming ThiS-thiocarboxylate. This is a step in the synthesis of thiazole, in the thiamine biosynthesis pathway. The sulfur is donated as persulfide by IscS. This is tRNA sulfurtransferase from Pseudomonas syringae pv. tomato (strain ATCC BAA-871 / DC3000).